The following is a 556-amino-acid chain: Fiber protein (556 aa).

Positions methionine 1–tyrosine 22 are disordered.

The protein belongs to the adenoviridae fiber family. Homotrimer. Interacts with host receptor CXCAR. Interacts (via N-terminal tail region) with pentons.

It is found in the virion. It localises to the host nucleus. Its function is as follows. Forms spikes that protrude from each vertex of the icosahedral capsid. Interacts with host receptor CXCAR to provide virion initial attachment to target cell. Fiber proteins are shed during virus entry, when virus is still at the cell surface. This chain is Fiber protein, found in Human adenovirus A serotype 31 (HAdV-31).